Consider the following 489-residue polypeptide: Serine/threonine-protein kinase dyf-5 (489 aa).

Positions 11-291 (YLMTKRLGDG…ANQSLRYKYF (281 aa)) constitute a Protein kinase domain. ATP contacts are provided by residues 17 to 25 (LGDGTFGEV) and lysine 40. The Proton acceptor role is filled by aspartate 132. Disordered regions lie at residues 366–385 (EKSD…KPTA) and 452–489 (QTGP…KYVK). Low complexity predominate over residues 458–473 (SNQTNNHSANNSHSPN).

Belongs to the protein kinase superfamily. CMGC Ser/Thr protein kinase family. RCK subfamily. The cofactor is Mg(2+). In terms of tissue distribution, expressed in head neurons including amphid and labial sensory neurons and 3 pairs of neurons in the tail including phasmid sensory neurons. In male, expressed in the tail including the sensory rays and the spicule.

It is found in the perikaryon. Its subcellular location is the cell projection. The protein resides in the dendrite. It localises to the axon. The protein localises to the cilium. The enzyme catalyses L-seryl-[protein] + ATP = O-phospho-L-seryl-[protein] + ADP + H(+). It catalyses the reaction L-threonyl-[protein] + ATP = O-phospho-L-threonyl-[protein] + ADP + H(+). Functionally, serine/threonine-protein kinase which is required for ciliogenesis. Regulates the length and the morphology of sensory neuron cilia. In addition, plays a role in the anterograde intraflagellar transport (IFT) in the cilia by regulating the undocking of kinesin-II motor complex (composed of klp-11, klp-20 and kap-1) before reaching the distal segment and the docking of kinesin motor osm-3 onto IFT cargos. This chain is Serine/threonine-protein kinase dyf-5, found in Caenorhabditis elegans.